We begin with the raw amino-acid sequence, 401 residues long: Argininosuccinate synthase (401 aa).

Position 9-17 (9-17) interacts with ATP; sequence AYSGGLDTS. Residue tyrosine 86 participates in L-citrulline binding. Glycine 116 contributes to the ATP binding site. Threonine 118, asparagine 122, and aspartate 123 together coordinate L-aspartate. Asparagine 122 is an L-citrulline binding site. Residues arginine 126, serine 174, serine 183, glutamate 259, and tyrosine 271 each coordinate L-citrulline.

The protein belongs to the argininosuccinate synthase family. Type 1 subfamily. Homotetramer.

Its subcellular location is the cytoplasm. It catalyses the reaction L-citrulline + L-aspartate + ATP = 2-(N(omega)-L-arginino)succinate + AMP + diphosphate + H(+). It participates in amino-acid biosynthesis; L-arginine biosynthesis; L-arginine from L-ornithine and carbamoyl phosphate: step 2/3. This is Argininosuccinate synthase from Bacillus thuringiensis (strain Al Hakam).